The following is a 432-amino-acid chain: Putative D-alanyl-D-alanine carboxypeptidase (432 aa).

A helical; Signal-anchor transmembrane segment spans residues 7-25; sequence ATVLLTFSLSAFAVEYPVL.

The protein belongs to the peptidase S12 family. YfeW subfamily.

The protein localises to the cell inner membrane. The enzyme catalyses Preferential cleavage: (Ac)2-L-Lys-D-Ala-|-D-Ala. Also transpeptidation of peptidyl-alanyl moieties that are N-acyl substituents of D-alanine.. This is Putative D-alanyl-D-alanine carboxypeptidase from Salmonella schwarzengrund (strain CVM19633).